The following is a 338-amino-acid chain: MCRRESLRTLPWLFWVLLSCPRLLEYSSSSFPFATADIAEKMWAENYETTSPAPVLVAEGEQVTIPCTVMTHSWPMVSIRARFCRSHDGSDELILDAVKGHRLMNGLQYRLPYATWNFSQLHLGQIFSLTFNVSTDTAGMYECVLRNYSHGLIMQRFVILTQLETLSRPDEPCCTPALGRYSLGDQIWSPTPWRLRNHDCGMYRGFQRNYFYIGRADAEDCWKPACPDEEPDRCWTVIQRYRLPGDCYRSQPHPPKFLPVTPAPPADIDTGMSPWATRGIAAFLGFWSIFTVCFLCYLCYLQCCGHWCPTPGRGRRGGEGYRRLPTYDSYPGVKKMKR.

The N-terminal stretch at 1–25 (MCRRESLRTLPWLFWVLLSCPRLLE) is a signal peptide. Topologically, residues 37 to 278 (DIAEKMWAEN…DTGMSPWATR (242 aa)) are extracellular. Asparagine 117, asparagine 132, and asparagine 147 each carry an N-linked (GlcNAc...) asparagine; by host glycan. A helical transmembrane segment spans residues 279-299 (GIAAFLGFWSIFTVCFLCYLC). Topologically, residues 300-338 (YLQCCGHWCPTPGRGRRGGEGYRRLPTYDSYPGVKKMKR) are cytoplasmic.

In terms of assembly, interacts with human PVR. Interacts with human TNFRSF10A and TNFRSF10B. Forms a homodimer that engages two TNFRSF10B monomers.

Its subcellular location is the host endoplasmic reticulum membrane. In terms of biological role, evasion of NK cell killing. Blocks surface expression of PVR which is a ligand for NK cell-activating receptors. Binds human PVR in the endoplasmic reticulum and prevents its maturation and transport to the cell surface. Targets also the natural killer cell activating ligand NECTIN2 for proteasome-mediated degradation. Additionally promotes intracellular retention of TNFRSF10A/TRAIL-R1 and TNFRSF10B/TRAIL-R2 and thus down-regulates their cell surface expression. This Human cytomegalovirus (strain Merlin) (HHV-5) protein is Protein UL141 (UL141).